Here is a 186-residue protein sequence, read N- to C-terminus: GTP cyclohydrolase 1 2 (186 aa).

This sequence belongs to the GTP cyclohydrolase I family. As to quaternary structure, homomer.

It catalyses the reaction GTP + H2O = 7,8-dihydroneopterin 3'-triphosphate + formate + H(+). The protein operates within cofactor biosynthesis; 7,8-dihydroneopterin triphosphate biosynthesis; 7,8-dihydroneopterin triphosphate from GTP: step 1/1. The chain is GTP cyclohydrolase 1 2 from Pseudomonas putida (strain ATCC 47054 / DSM 6125 / CFBP 8728 / NCIMB 11950 / KT2440).